Reading from the N-terminus, the 209-residue chain is Ribosomal RNA large subunit methyltransferase E (209 aa).

5 residues coordinate S-adenosyl-L-methionine: glycine 63, tryptophan 65, aspartate 83, aspartate 99, and aspartate 124. Lysine 164 functions as the Proton acceptor in the catalytic mechanism.

This sequence belongs to the class I-like SAM-binding methyltransferase superfamily. RNA methyltransferase RlmE family.

Its subcellular location is the cytoplasm. The catalysed reaction is uridine(2552) in 23S rRNA + S-adenosyl-L-methionine = 2'-O-methyluridine(2552) in 23S rRNA + S-adenosyl-L-homocysteine + H(+). Specifically methylates the uridine in position 2552 of 23S rRNA at the 2'-O position of the ribose in the fully assembled 50S ribosomal subunit. The sequence is that of Ribosomal RNA large subunit methyltransferase E from Pseudoalteromonas atlantica (strain T6c / ATCC BAA-1087).